Reading from the N-terminus, the 150-residue chain is Ribosome maturation factor RimP (150 aa).

It belongs to the RimP family.

The protein localises to the cytoplasm. In terms of biological role, required for maturation of 30S ribosomal subunits. This chain is Ribosome maturation factor RimP, found in Salmonella dublin (strain CT_02021853).